Reading from the N-terminus, the 411-residue chain is Kelch domain-containing protein 10 (411 aa).

6 Kelch repeats span residues 72–133 (NLYV…LHGH), 135–186 (LLVF…IIHG), 187–239 (FLYV…HDGQ), 240–288 (RIYV…RRCH), 296–342 (EVFI…AVTP), and 345–388 (CMYI…YFPQ).

It belongs to the KLHDC10 family. In terms of assembly, component of a CRL2 E3 ubiquitin-protein ligase complex, also named ECS (Elongin BC-CUL2/5-SOCS-box protein) complex, composed of CUL2, Elongin BC (ELOB and ELOC), RBX1 and substrate-specific adapter KLHDC10.

It participates in protein modification; protein ubiquitination. In terms of biological role, substrate-recognition component of a Cul2-RING (CRL2) E3 ubiquitin-protein ligase complex of the DesCEND (destruction via C-end degrons) pathway, which recognizes a C-degron located at the extreme C terminus of target proteins, leading to their ubiquitination and degradation. The C-degron recognized by the DesCEND pathway is usually a motif of less than ten residues and can be present in full-length proteins, truncated proteins or proteolytically cleaved forms. The CRL2(KLHDC10) complex specifically recognizes proteins with a proline-glycine (Pro-Gly) or an alanine tail (CAT tail) at the C-terminus, leading to their ubiquitination and degradation. The CRL2(KLHDC10) complex is involved in the ribosome-associated quality control (RQC) pathway, which mediates the extraction of incompletely synthesized nascent chains from stalled ribosomes: CRL2(KLHDC10) acts downstream of NEMF and recognizes CAT tails associated with stalled nascent chains, leading to their ubiquitination and degradation. The protein is Kelch domain-containing protein 10 of Xenopus laevis (African clawed frog).